The primary structure comprises 622 residues: 3-(3-hydroxy-phenyl)propionate/3-hydroxycinnamic acid hydroxylase (622 aa).

FAD is bound by residues 20-49 (DVAI…VLEK) and 288-298 (FRVDRVLLAGD).

Belongs to the PheA/TfdB FAD monooxygenase family. FAD is required as a cofactor.

The catalysed reaction is 3-(3-hydroxyphenyl)propanoate + NADH + O2 + H(+) = 3-(2,3-dihydroxyphenyl)propanoate + NAD(+) + H2O. It carries out the reaction (2E)-3-(3-hydroxyphenyl)prop-2-enoate + NADH + O2 + H(+) = (2E)-3-(2,3-dihydroxyphenyl)prop-2-enoate + NAD(+) + H2O. It participates in aromatic compound metabolism; 3-phenylpropanoate degradation. Catalyzes the insertion of one atom of molecular oxygen into position 2 of the phenyl ring of 3-(3-hydroxyphenyl)propionate (3-HPP) and hydroxycinnamic acid (3HCI). The polypeptide is 3-(3-hydroxy-phenyl)propionate/3-hydroxycinnamic acid hydroxylase (Paraburkholderia xenovorans (strain LB400)).